The sequence spans 588 residues: Sperm-associated microtubule inner protein 4 (588 aa).

Phosphothreonine is present on Thr-219. Phosphoserine occurs at positions 224, 406, 421, 427, and 437. A Phosphotyrosine modification is found at Tyr-441. Phosphoserine is present on residues Ser-457 and Ser-484. Thr-512 carries the phosphothreonine modification. Residue Ser-516 is modified to Phosphoserine. Lys-543 is covalently cross-linked (Glycyl lysine isopeptide (Lys-Gly) (interchain with G-Cter in SUMO2)). The residue at position 545 (Ser-545) is a Phosphoserine.

It is found in the cytoplasm. Its subcellular location is the cytoskeleton. The protein localises to the microtubule organizing center. It localises to the centrosome. The protein resides in the flagellum axoneme. Its function is as follows. Microtubule inner protein (MIP) part of the dynein-decorated doublet microtubules (DMTs) in flagellum axoneme. May serve to reinforce and thus stabilize the microtubule structure in the sperm flagella. This Rattus norvegicus (Rat) protein is Sperm-associated microtubule inner protein 4 (Spmip4).